Reading from the N-terminus, the 328-residue chain is PhoH-like protein (328 aa).

Residue 135 to 142 participates in ATP binding; the sequence is GPAGTGKT.

It belongs to the PhoH family.

The protein resides in the cytoplasm. In Synechocystis sp. (strain ATCC 27184 / PCC 6803 / Kazusa), this protein is PhoH-like protein.